The following is a 205-amino-acid chain: Thymidine kinase (205 aa).

ATP-binding positions include serine 9 to serine 16 and aspartate 87 to glutamine 90. The active-site Proton acceptor is the glutamate 88. Positions 145, 147, 182, and 185 each coordinate Zn(2+).

It belongs to the thymidine kinase family. As to quaternary structure, homotetramer.

The protein localises to the cytoplasm. It carries out the reaction thymidine + ATP = dTMP + ADP + H(+). Allosteric enzyme which is feedback inhibited by dTTP and activated by a number of dNDP and dNTP. In terms of biological role, phosphorylates both thymidine and deoxyuridine. This chain is Thymidine kinase, found in Escherichia coli O157:H7.